The following is a 293-amino-acid chain: MATTRGKKTYPQLPPAPDDYPTFPDKSTWPVVFPEIPAGTNGRFARPPQHTSKAAAPKIPADQVPNHVAVVMDGNGRWATQRGLGRTEGHKMGEAVLIDITCGAIEIGIKHLTVYAFSTENWKRSTEEVRFLMGFNREVVRRRRENLNDMGVRMRWVGSRPRMWRSVIKEFDIAEQMTVDNDVITINYCVNYGGRTEIVEAARALAQEAVDGKINPARISEAMFAKHLHRADIPDVDLFIRTSGEQRASNFLLWQAAYAEYVFQDKLWPDYDRRDLWAACEEYVNRNRRFGRA.

Positions 1 to 24 (MATTRGKKTYPQLPPAPDDYPTFP) are disordered. The active site involves aspartate 73. Position 73 (aspartate 73) interacts with Mg(2+). Residues 74-77 (GNGR), tryptophan 78, arginine 86, histidine 90, and 118-120 (STE) each bind substrate. Asparagine 121 acts as the Proton acceptor in catalysis. Residues tryptophan 122, arginine 124, arginine 241, and 247 to 249 (RAS) each bind substrate. Glutamate 260 is a Mg(2+) binding site.

It belongs to the UPP synthase family. In terms of assembly, homodimer. It depends on Mg(2+) as a cofactor.

It is found in the cell membrane. The catalysed reaction is (2Z,6E)-farnesyl diphosphate + 7 isopentenyl diphosphate = (2Z,6Z,10Z,14Z,18Z,22Z,26Z,30Z,34E)-decaprenyl diphosphate + 7 diphosphate. It carries out the reaction n isopentenyl diphosphate + (2E,6E)-farnesyl diphosphate = a di-trans,poly-cis-polyprenyl diphosphate + n diphosphate. Catalyzes the sequential condensation of isopentenyl diphosphate (IPP) in the cis configuration with (2Z,6E)-farnesyl diphosphate (Z-FPP or EZ-FPP) generating the 50 carbon product trans,polycis-decaprenyl diphosphate. When (2E,6E)-farnesyl diphosphate (E-FPP or EE-FPP) is used in vitro, both primary products decaprenyl diphosphate and heptaprenyl diphosphate are synthesized. It is probably due to the fact that M.smegmatis synthesizes both (2E,6E,10E)-geranylgeranyl diphosphate (EEE-GGPP) and (2E,6E,10Z)-geranylgeranyl diphosphate (EEZ-GGPP). Can also accept many different allylic substrates, including E-geranyl diphosphate (E-GPP), neryl diphosphate (NPP), and all-trans-geranyl-geranyl diphosphate. The polypeptide is Decaprenyl diphosphate synthase (uppS) (Mycolicibacterium smegmatis (strain ATCC 700084 / mc(2)155) (Mycobacterium smegmatis)).